The chain runs to 465 residues: Probable zinc metalloprotease PTT_17836 (465 aa).

Residues 1–20 (MRSASTLAVCAATLLQIACS) form the signal peptide. N-linked (GlcNAc...) asparagine glycosylation occurs at Asn140. Residues His163, Asp183, and Glu216 each coordinate Zn(2+). Residue Asn231 is glycosylated (N-linked (GlcNAc...) asparagine). Asp243 is a binding site for Zn(2+). N-linked (GlcNAc...) asparagine glycosylation is found at Asn272, Asn330, Asn378, Asn384, Asn421, and Asn426. The 94-residue stretch at 371–464 (APTNVGVNTT…LPFPFGCARN (94 aa)) folds into the Fibronectin type-III domain.

Belongs to the peptidase M28 family. M28B subfamily. Zn(2+) is required as a cofactor.

It is found in the secreted. The polypeptide is Probable zinc metalloprotease PTT_17836 (Pyrenophora teres f. teres (strain 0-1) (Barley net blotch fungus)).